The sequence spans 174 residues: Crossover junction endodeoxyribonuclease RuvC (174 aa).

Active-site residues include Asp16, Glu76, and Asp148. Residues Asp16, Glu76, and Asp148 each coordinate Mg(2+).

It belongs to the RuvC family. Homodimer which binds Holliday junction (HJ) DNA. The HJ becomes 2-fold symmetrical on binding to RuvC with unstacked arms; it has a different conformation from HJ DNA in complex with RuvA. In the full resolvosome a probable DNA-RuvA(4)-RuvB(12)-RuvC(2) complex forms which resolves the HJ. Requires Mg(2+) as cofactor.

It localises to the cytoplasm. The catalysed reaction is Endonucleolytic cleavage at a junction such as a reciprocal single-stranded crossover between two homologous DNA duplexes (Holliday junction).. Functionally, the RuvA-RuvB-RuvC complex processes Holliday junction (HJ) DNA during genetic recombination and DNA repair. Endonuclease that resolves HJ intermediates. Cleaves cruciform DNA by making single-stranded nicks across the HJ at symmetrical positions within the homologous arms, yielding a 5'-phosphate and a 3'-hydroxyl group; requires a central core of homology in the junction. The consensus cleavage sequence is 5'-(A/T)TT(C/G)-3'. Cleavage occurs on the 3'-side of the TT dinucleotide at the point of strand exchange. HJ branch migration catalyzed by RuvA-RuvB allows RuvC to scan DNA until it finds its consensus sequence, where it cleaves and resolves the cruciform DNA. In Rhodopseudomonas palustris (strain ATCC BAA-98 / CGA009), this protein is Crossover junction endodeoxyribonuclease RuvC.